Reading from the N-terminus, the 346-residue chain is Elongation factor Ts (346 aa).

The tract at residues 80–83 is involved in Mg(2+) ion dislocation from EF-Tu; it reads TDFV.

The protein belongs to the EF-Ts family.

The protein localises to the cytoplasm. In terms of biological role, associates with the EF-Tu.GDP complex and induces the exchange of GDP to GTP. It remains bound to the aminoacyl-tRNA.EF-Tu.GTP complex up to the GTP hydrolysis stage on the ribosome. The polypeptide is Elongation factor Ts (Streptococcus thermophilus (strain CNRZ 1066)).